We begin with the raw amino-acid sequence, 152 residues long: MTVTDLVLVLFIVALLAYAIYDQFIMPRRNGPTLLAVPLLRRGRVDSVIFVGLVAILIYNNVTSHGAQITTWLLCALALMGFYIFWVRAPRIIFKQKGFFFANVWIEYNRIKEMNLSEDGVLVMQLEQRRLLIRVRNIDDLERIYKLLVSSQ.

Transmembrane regions (helical) follow at residues 6-26, 45-65, and 67-87; these read LVLV…QFIM, VDSV…VTSH, and AQIT…IFWV.

The protein belongs to the UPF0266 family.

The protein localises to the cell inner membrane. This Citrobacter koseri (strain ATCC BAA-895 / CDC 4225-83 / SGSC4696) protein is UPF0266 membrane protein CKO_01158.